Consider the following 335-residue polypeptide: Ribosomal RNA large subunit methyltransferase F (335 aa).

The protein belongs to the methyltransferase superfamily. METTL16/RlmF family.

The protein localises to the cytoplasm. The enzyme catalyses adenosine(1618) in 23S rRNA + S-adenosyl-L-methionine = N(6)-methyladenosine(1618) in 23S rRNA + S-adenosyl-L-homocysteine + H(+). In terms of biological role, specifically methylates the adenine in position 1618 of 23S rRNA. In Yersinia enterocolitica serotype O:8 / biotype 1B (strain NCTC 13174 / 8081), this protein is Ribosomal RNA large subunit methyltransferase F.